The sequence spans 466 residues: Histidinol dehydrogenase, chloroplastic (466 aa).

The N-terminal 30 residues, 1-30 (MSLNLSRLSLLSSPRISISTHAPRKGYVCC), are a transit peptide targeting the chloroplast. The NAD(+) site is built by Tyr155, Gln217, and Asn240. 3 residues coordinate substrate: Ser266, Gln288, and His291. Residues Gln288 and His291 each contribute to the Zn(2+) site. Residues Glu356 and His357 each act as proton acceptor in the active site. The substrate site is built by His357, Asp390, Glu444, and His449. Zn(2+) is bound at residue Asp390. His449 lines the Zn(2+) pocket.

The protein belongs to the histidinol dehydrogenase family. Zn(2+) serves as cofactor.

The protein resides in the plastid. The protein localises to the chloroplast. The enzyme catalyses L-histidinol + 2 NAD(+) + H2O = L-histidine + 2 NADH + 3 H(+). The protein operates within amino-acid biosynthesis; L-histidine biosynthesis; L-histidine from 5-phospho-alpha-D-ribose 1-diphosphate: step 9/9. Catalyzes the sequential NAD-dependent oxidations of L-histidinol to L-histidinaldehyde and then to L-histidine. The chain is Histidinol dehydrogenase, chloroplastic (HISN8) from Arabidopsis thaliana (Mouse-ear cress).